A 247-amino-acid polypeptide reads, in one-letter code: Ras-like protein family member 11B (247 aa).

The tract at residues 28–245 (AGRRLVKIAV…ALSAKVRTVT (218 aa)) is small GTPase-like. GTP contacts are provided by residues 39 to 46 (GASGVGKT), 86 to 93 (DTPGIQVH), and 151 to 154 (NKAD). The tract at residues 202 to 228 (PKQQPSSTPEKRRTSLIPRPKSPNMQD) is disordered.

It belongs to the small GTPase superfamily. Ras family.

The catalysed reaction is GTP + H2O = GDP + phosphate + H(+). In Mus musculus (Mouse), this protein is Ras-like protein family member 11B.